Here is a 117-residue protein sequence, read N- to C-terminus: Protein Wnt-6 (117 aa).

A lipid anchor (O-palmitoleoyl serine; by PORCN) is attached at serine 1. Cysteine 83 and cysteine 98 are oxidised to a cystine. Asparagine 84 carries N-linked (GlcNAc...) asparagine glycosylation.

Belongs to the Wnt family. Palmitoleoylation is required for efficient binding to frizzled receptors. Depalmitoleoylation leads to Wnt signaling pathway inhibition.

It localises to the secreted. It is found in the extracellular space. The protein localises to the extracellular matrix. In terms of biological role, ligand for members of the frizzled family of seven transmembrane receptors. Probable developmental protein. May be a signaling molecule which affects the development of discrete regions of tissues. Is likely to signal over only few cell diameters. The chain is Protein Wnt-6 (WNT-6) from Plethodon jordani (Red-cheeked salamander).